A 597-amino-acid polypeptide reads, in one-letter code: MKHIRNFSIIAHIDHGKSTLSDRLIQVCGGLSDREMAAQVLDSMDLERERGITIKAQSVTLNYTANDGETYQLNFIDTPGHVDFSYEVSRSLAACEGALLVVDAGQGVEAQTLANCYTALEMDLEVVPILNKIDLPAADPDRVAEEIEDIVGIEAMEATRCSAKTGLGVDAVLETIVKCIPAPEGNPEGPTQALIIDSWFDNYLGVVSLVRVKHGSLKKNDKIKVMSTGQAWNVDRIGIFTPKQVDTDGLNTGEVGWVVCGIKDILGAPVGDTLTHAKGGCEERLPGFQKVKPQVYAGLFPISSDDYENFRDALGKLSLNDASLFYEPESSSALGFGFRCGFLGMLHMEIIQERLEREYDLDLITTAPTVVYEVVLNNGDLLYVDSPAKLPAVNDLDEIREPIARCNILVPAEYLGNVISLCIEKRGTQVDMIYHGNQVALTYDIPMSEVVLDFFDRLKSTSRGYASLDYNFQRYELSNMVRVDVLINAERVDALAIITHHDNAQGRGRLLVEKMKEFIPRQMFDIAIQAAIGGHIIARSTVKQLRKNVIAKCYGGDISRKKKLLKKQKDGKKRMKQIGNVELPQEAFLAILHVGKD.

A tr-type G domain is found at Lys-2–Glu-184. GTP-binding positions include Asp-14–Thr-19 and Asn-131–Asp-134.

Belongs to the TRAFAC class translation factor GTPase superfamily. Classic translation factor GTPase family. LepA subfamily.

The protein localises to the cell inner membrane. It carries out the reaction GTP + H2O = GDP + phosphate + H(+). In terms of biological role, required for accurate and efficient protein synthesis under certain stress conditions. May act as a fidelity factor of the translation reaction, by catalyzing a one-codon backward translocation of tRNAs on improperly translocated ribosomes. Back-translocation proceeds from a post-translocation (POST) complex to a pre-translocation (PRE) complex, thus giving elongation factor G a second chance to translocate the tRNAs correctly. Binds to ribosomes in a GTP-dependent manner. The polypeptide is Elongation factor 4 (Aliivibrio salmonicida (strain LFI1238) (Vibrio salmonicida (strain LFI1238))).